The sequence spans 239 residues: Enolase-phosphatase E1 (239 aa).

Residues Asp13 and Glu15 each coordinate Mg(2+). Substrate-binding positions include 133 to 134 (SS) and Lys170. Asp196 contributes to the Mg(2+) binding site.

Belongs to the HAD-like hydrolase superfamily. MasA/MtnC family. As to quaternary structure, monomer. Mg(2+) serves as cofactor.

It is found in the cytoplasm. The protein localises to the nucleus. The catalysed reaction is 5-methylsulfanyl-2,3-dioxopentyl phosphate + H2O = 1,2-dihydroxy-5-(methylsulfanyl)pent-1-en-3-one + phosphate. It functions in the pathway amino-acid biosynthesis; L-methionine biosynthesis via salvage pathway; L-methionine from S-methyl-5-thio-alpha-D-ribose 1-phosphate: step 3/6. It participates in amino-acid biosynthesis; L-methionine biosynthesis via salvage pathway; L-methionine from S-methyl-5-thio-alpha-D-ribose 1-phosphate: step 4/6. In terms of biological role, bifunctional enzyme that catalyzes the enolization of 2,3-diketo-5-methylthiopentyl-1-phosphate (DK-MTP-1-P) into the intermediate 2-hydroxy-3-keto-5-methylthiopentenyl-1-phosphate (HK-MTPenyl-1-P), which is then dephosphorylated to form the acireductone 1,2-dihydroxy-3-keto-5-methylthiopentene (DHK-MTPene). The sequence is that of Enolase-phosphatase E1 from Chaetomium globosum (strain ATCC 6205 / CBS 148.51 / DSM 1962 / NBRC 6347 / NRRL 1970) (Soil fungus).